The sequence spans 754 residues: uncharacterized protein (754 aa).

The tract at residues 1 to 110 (MNKGQNQVVP…RNMLGSLQKT (110 aa)) is disordered. A compositionally biased stretch (polar residues) spans 15–25 (FGGQNPPQLSS). The span at 26–35 (IPPIVNPVVV) shows a compositional bias: low complexity. The span at 36–46 (QNRTSPGTPFI) shows a compositional bias: polar residues. Basic and acidic residues predominate over residues 49 to 60 (KAKEIYNRRQQE). Acidic residues predominate over residues 62-72 (ISSDSEEEESP). Residues 76–93 (AKSKYSRDSRDSRDTRDS) show a composition bias toward basic and acidic residues.

Its subcellular location is the virion. This is an uncharacterized protein from Acanthamoeba polyphaga mimivirus (APMV).